The sequence spans 316 residues: MTSPKDNQTAKPVCFQDVILRLQSYWAAQGCAVLQPYDMEVGAGTFHPATTLRSLGARPWAAAYVQPSRRPTDGRYGENPNRLQHYYQYQVIIKPSPPNLQELYLGSLAAIGLDPMIHDVRFVEDDWESPTLGAWGLGWEVWCDGMEVSQFTYFQQVGGHDCRPVSGELTYGLERLAMYVLGVEHVMDMPFNPPGSPIPLSYGDVFRQAEREYSRWNFEQADTGMLLQHFKDAEAECDRILTAAETDSAGRRIPMAHPAYDQAIKASHLFNLLDARGVISVTERQAYIGRVRALAKRCADLFVTTEAATLQAEDAA.

It belongs to the class-II aminoacyl-tRNA synthetase family. In terms of assembly, tetramer of two alpha and two beta subunits.

The protein resides in the cytoplasm. It carries out the reaction tRNA(Gly) + glycine + ATP = glycyl-tRNA(Gly) + AMP + diphosphate. This Paracoccus denitrificans (strain Pd 1222) protein is Glycine--tRNA ligase alpha subunit.